A 272-amino-acid chain; its full sequence is Auxin-responsive protein IAA5 (272 aa).

Residues 1 to 92 (MSPPLEPHDY…DSSPRHGASS (92 aa)) form a disordered region. Low complexity-rich tracts occupy residues 14-33 (SAAAASPTPSSSSCSSSPNP) and 40-50 (PRLTLRLGLPG). The EAR-like (transcriptional repression) motif lies at 44-48 (LRLGL). The 105-residue stretch at 152 to 256 (PLYVKVSMDG…RKLKIMRGSD (105 aa)) folds into the PB1 domain.

It belongs to the Aux/IAA family. In terms of assembly, homodimers and heterodimers. In terms of tissue distribution, highly expressed in roots and flowers. Expressed in shoots.

Its subcellular location is the nucleus. In terms of biological role, aux/IAA proteins are short-lived transcriptional factors that function as repressors of early auxin response genes at low auxin concentrations. This is Auxin-responsive protein IAA5 (IAA5) from Oryza sativa subsp. indica (Rice).